Consider the following 81-residue polypeptide: MGSLSLWHWIIVGAVLLLLFGGKGKVSDIMGDVAKGIKSFKKGLSEDDEKPEAARPAEPARSLDHQPVAEQPKVSETHRIG.

A helical membrane pass occupies residues 1–21 (MGSLSLWHWIIVGAVLLLLFG). Residues 41 to 81 (KKGLSEDDEKPEAARPAEPARSLDHQPVAEQPKVSETHRIG) form a disordered region.

It belongs to the TatA/E family. As to quaternary structure, the Tat system comprises two distinct complexes: a TatABC complex, containing multiple copies of TatA, TatB and TatC subunits, and a separate TatA complex, containing only TatA subunits. Substrates initially bind to the TatABC complex, which probably triggers association of the separate TatA complex to form the active translocon.

The protein localises to the cell inner membrane. Part of the twin-arginine translocation (Tat) system that transports large folded proteins containing a characteristic twin-arginine motif in their signal peptide across membranes. TatA could form the protein-conducting channel of the Tat system. This Beijerinckia indica subsp. indica (strain ATCC 9039 / DSM 1715 / NCIMB 8712) protein is Sec-independent protein translocase protein TatA.